The sequence spans 257 residues: DNA repair protein RecO (257 aa).

Belongs to the RecO family.

Its function is as follows. Involved in DNA repair and RecF pathway recombination. In Streptococcus thermophilus (strain CNRZ 1066), this protein is DNA repair protein RecO.